The chain runs to 73 residues: Serine rich endogenous peptide 1 (73 aa).

The first 28 residues, 1-28 (MGMSGSSGLVHVLMLLLLLSILFHHTES), serve as a signal peptide directing secretion. The tract at residues 48-73 (YKPNTAVETPPSRSRRGGGGQNTGAD) is disordered. Positions 53-67 (AVETPPSRSRRGGGG) match the SCOOP motif motif. Positions 59-61 (SRS) match the SxS motif essential for MIK2 binding motif. A compositionally biased stretch (gly residues) spans 64 to 73 (GGGGQNTGAD).

It belongs to the serine rich endogenous peptide (SCOOP) phytocytokine family. Interacts with MIK2 (via extracellular leucine-rich repeat domain); this interaction triggers the formation of complex between MIK2 and the BAK1/SERK3 and SERK4 coreceptors, and subsequent BAK1 activation by phosphorylation. As to expression, mostly expressed in leaves and flowers, and, to a lower extent, in seedlings shoots.

Its subcellular location is the cell membrane. It is found in the secreted. It localises to the extracellular space. The protein resides in the apoplast. In terms of biological role, brassicaceae-specific phytocytokine (plant endogenous peptide released into the apoplast) perceived by MIK2 in a BAK1/SERK3 and SERK4 coreceptors-dependent manner, that modulates various physiological and antimicrobial processes including growth prevention and reactive oxygen species (ROS) response regulation. This is Serine rich endogenous peptide 1 from Arabidopsis thaliana (Mouse-ear cress).